We begin with the raw amino-acid sequence, 91 residues long: Putative defensin-like protein 221 (91 aa).

A signal peptide spans 1-19 (MKTLFFFLTIAVLVSSCTS). Intrachain disulfides connect cysteine 61-cysteine 78, cysteine 64-cysteine 83, and cysteine 68-cysteine 85.

It belongs to the DEFL family.

It localises to the secreted. The protein is Putative defensin-like protein 221 of Arabidopsis thaliana (Mouse-ear cress).